The primary structure comprises 616 residues: UPF0329 protein ECU02_1540 (616 aa).

Basic and acidic residues-rich tracts occupy residues 350–359 and 369–381; these read EREKREESKG and GAGEAKEESKEED. The tract at residues 350-427 is disordered; the sequence is EREKREESKG…RKGDGHHYKI (78 aa). Residues 382–396 are compositionally biased toward acidic residues; it reads GKEEEGVEAEEEESA. Residues 408–427 show a composition bias toward basic residues; the sequence is ARRKKSLKGKRKGDGHHYKI.

The protein belongs to the UPF0329 family.

The chain is UPF0329 protein ECU02_1540 from Encephalitozoon cuniculi (strain GB-M1) (Microsporidian parasite).